Here is a 422-residue protein sequence, read N- to C-terminus: Histidine--tRNA ligase (422 aa).

The protein belongs to the class-II aminoacyl-tRNA synthetase family. As to quaternary structure, homodimer.

Its subcellular location is the cytoplasm. It catalyses the reaction tRNA(His) + L-histidine + ATP = L-histidyl-tRNA(His) + AMP + diphosphate + H(+). This is Histidine--tRNA ligase from Nocardia farcinica (strain IFM 10152).